Reading from the N-terminus, the 172-residue chain is Large ribosomal subunit protein uL10 (172 aa).

The protein belongs to the universal ribosomal protein uL10 family. In terms of assembly, part of the ribosomal stalk of the 50S ribosomal subunit. The N-terminus interacts with L11 and the large rRNA to form the base of the stalk. The C-terminus forms an elongated spine to which L12 dimers bind in a sequential fashion forming a multimeric L10(L12)X complex.

In terms of biological role, forms part of the ribosomal stalk, playing a central role in the interaction of the ribosome with GTP-bound translation factors. The polypeptide is Large ribosomal subunit protein uL10 (Parvibaculum lavamentivorans (strain DS-1 / DSM 13023 / NCIMB 13966)).